Here is a 697-residue protein sequence, read N- to C-terminus: Protein arginine N-methyltransferase 7 (697 aa).

2 SAM-dependent MTase PRMT-type domains span residues 14–357 (QNTW…YSLW) and 366–697 (EQPA…EETK).

This sequence belongs to the class I-like SAM-binding methyltransferase superfamily. Protein arginine N-methyltransferase family. PRMT7 subfamily.

In terms of biological role, essential arginine methyltransferase that can both catalyze the formation of omega-N monomethylarginine (MMA) and symmetrical dimethylarginine (sDMA). Specifically mediates the symmetrical dimethylation of arginine residues in the small nuclear ribonucleoproteins SmD1 and SmD3. This is Protein arginine N-methyltransferase 7 (Art7) from Drosophila virilis (Fruit fly).